A 799-amino-acid chain; its full sequence is Elongation factor G, mitochondrial (799 aa).

The N-terminal 24 residues, 1 to 24, are a transit peptide targeting the mitochondrion; the sequence is MRCPSLARLPHRAVSGLTRTPVRF. The tr-type G domain occupies 97 to 384; sequence SRVRNIGIAA…GVIDYLPNPS (288 aa). GTP contacts are provided by residues 106–113, 182–186, and 236–239; these read AHIDSGKT, DTPGH, and NKMD.

It belongs to the TRAFAC class translation factor GTPase superfamily. Classic translation factor GTPase family. EF-G/EF-2 subfamily.

Its subcellular location is the mitochondrion. Its pathway is protein biosynthesis; polypeptide chain elongation. Its function is as follows. Mitochondrial GTPase that catalyzes the GTP-dependent ribosomal translocation step during translation elongation. During this step, the ribosome changes from the pre-translocational (PRE) to the post-translocational (POST) state as the newly formed A-site-bound peptidyl-tRNA and P-site-bound deacylated tRNA move to the P and E sites, respectively. Catalyzes the coordinated movement of the two tRNA molecules, the mRNA and conformational changes in the ribosome. This chain is Elongation factor G, mitochondrial (mef1), found in Emericella nidulans (strain FGSC A4 / ATCC 38163 / CBS 112.46 / NRRL 194 / M139) (Aspergillus nidulans).